The chain runs to 399 residues: MGSTDTEDQVRTIDVGTPPERYARGWHCLGLVRDFADGKPHQVDAFGTSLVVFAGEDGKLNVLDAYCRHMGGNLAQGSVKGNTIACPFHDWRWRGDGKCAEIPYARRVPPLARTRTWPVAEVSGQLFVWHDPQGSKPPAELAVPEVPTYGDPGWTDWVWNSIEVTGSHCREIVDNVVDMAHFFYVHYGMPTYFRNVFEGHTATQVMRSLPRADAVGVSQATNYSAESRSDATYYGPSYMIDKLWSAGRDPESTPNIYLINCHYPISPTSFRLQYGVMVERPEGVPPEQAEQIAQAVAQGVAIGFEQDVEIWKNKSRIDNPLLCEEDGPVYQLRRWYEQFYVDVEDIRPEMVNRFEYEIDTTRALTSWQAEVDENVAAGRSAFAPNLTRAREAASAESGS.

One can recognise a Rieske domain in the interval 26–128 (WHCLGLVRDF…VAEVSGQLFV (103 aa)). Residues Cys-67, His-69, Cys-86, and His-89 each coordinate [2Fe-2S] cluster. Residues Asn-175, His-181, His-186, and Asp-307 each coordinate Fe cation.

Homotrimer. The two-component system 3-ketosteroid-9-alpha-monooxygenase is composed of an oxygenase component KshA and a reductase component KshB. [2Fe-2S] cluster serves as cofactor. It depends on Fe cation as a cofactor.

In terms of biological role, could catalyze the introduction of a 9alpha-hydroxyl moiety into the ring B of 3-ketosteroid substrates. The chain is Probable 3-ketosteroid-9-alpha-monooxygenase, oxygenase component from Rhodococcus rhodochrous.